The following is a 251-amino-acid chain: Intermembrane phospholipid transport system lipoprotein MlaA (251 aa).

The signal sequence occupies residues 1 to 17 (MKLRLSALALGTTLLVG). Residue Cys18 is the site of N-palmitoyl cysteine attachment. Residue Cys18 is the site of S-diacylglycerol cysteine attachment. Residues 228–251 (GELKPQENPNAQAIQDDLKDIDSE) are disordered.

The protein belongs to the MlaA family.

The protein resides in the cell outer membrane. Involved in a phospholipid transport pathway that maintains lipid asymmetry in the outer membrane by retrograde trafficking of phospholipids from the outer membrane to the inner membrane. Required for intercellular spreading of S.flexneri. In Shigella flexneri, this protein is Intermembrane phospholipid transport system lipoprotein MlaA.